The primary structure comprises 862 residues: MEKNITPMMRQYLDIKKKYKDAIIFFRVGSFYEMFFDDAIEASKLLNLTLTKRENVPMCGVPYHTSKEYIRKLILFDKKVAICEQASNLTSTGPLEREVVEVITPGVIVDEDFLNDDVNNYLVAISDYKNYYSFSYIDLSTSSLGVMFYENSFFEKLKRDLEKYSPKEIIVSENFYYQYLHKLNLSRFLINRVPAWHLDKDIAIKTIKEHFNILGLSSLGFDEEKPYYISIFLIINHIKNNLKNLLSNIDKIDINNDSSYMFLDDVTQVNLELVKNNNDFSSQYSLYSVLNDCKTAMGKRLLREFILNPILNISEINTRLDHVEFFYKNISLTMTLREAFINIWDIERIISRIQMKRYIKKDFLFIEKALSVFFLVKKLFDKHNFDYWNFDKFEEDSVSKVYFLINSAISDSSDELIKRGYDLKLDNLKDLKINANKYIDEYLESERILSKINNLKIRKTNNRGLFFEVTKSNYSQVPSHFMESQTLSSSKRYKTEKLISLEVDINNAEDSVVAFEQEIFDEIAANVVKHNKVLKKVAEFFAYIDLVVNFGYLAKKNEYKRPVLTSDKEIFLDKSRHPVVEHYVKNAEIFTENFVRINKERHFCLITGPNMAGKSTYLRQVALITLMAHIGSFVPASKALIGITDKIFCRIGASDNLAKGESTFLVEMNETANILRNATEKSLIIMDEVGRGTSTNDGLAIAYSIIEYILEYIKARSLFATHFHELSAINHKAFINLSMKIEKQGNDLVFLREIEEKPSLNSYGIYVARIAGLPLKVIDRANAILESLLSRKGSSFLEFLPYISSDSNDKEALKNDTDVNVKLNEYLELKNFISNIDINNITPFQSIELLNQIVLKVISQSS.

Position 608 to 615 (608 to 615 (GPNMAGKS)) interacts with ATP.

The protein belongs to the DNA mismatch repair MutS family.

Its function is as follows. This protein is involved in the repair of mismatches in DNA. It is possible that it carries out the mismatch recognition step. This protein has a weak ATPase activity. This Borrelia garinii subsp. bavariensis (strain ATCC BAA-2496 / DSM 23469 / PBi) (Borreliella bavariensis) protein is DNA mismatch repair protein MutS.